Here is a 214-residue protein sequence, read N- to C-terminus: Imidazole glycerol phosphate synthase subunit HisH (214 aa).

Residues Ile3–Thr211 enclose the Glutamine amidotransferase type-1 domain. The active-site Nucleophile is the Cys81. Active-site residues include His186 and Glu188.

As to quaternary structure, heterodimer of HisH and HisF.

It localises to the cytoplasm. The enzyme catalyses 5-[(5-phospho-1-deoxy-D-ribulos-1-ylimino)methylamino]-1-(5-phospho-beta-D-ribosyl)imidazole-4-carboxamide + L-glutamine = D-erythro-1-(imidazol-4-yl)glycerol 3-phosphate + 5-amino-1-(5-phospho-beta-D-ribosyl)imidazole-4-carboxamide + L-glutamate + H(+). It catalyses the reaction L-glutamine + H2O = L-glutamate + NH4(+). It participates in amino-acid biosynthesis; L-histidine biosynthesis; L-histidine from 5-phospho-alpha-D-ribose 1-diphosphate: step 5/9. Functionally, IGPS catalyzes the conversion of PRFAR and glutamine to IGP, AICAR and glutamate. The HisH subunit catalyzes the hydrolysis of glutamine to glutamate and ammonia as part of the synthesis of IGP and AICAR. The resulting ammonia molecule is channeled to the active site of HisF. This Acaryochloris marina (strain MBIC 11017) protein is Imidazole glycerol phosphate synthase subunit HisH.